Reading from the N-terminus, the 47-residue chain is uncharacterized protein (47 aa).

Positions 19-47 (EKVLKNQNPDRLSHMTDKNAQPKSKEKEE) are disordered.

This is an uncharacterized protein from Bacillus subtilis (strain 168).